Reading from the N-terminus, the 955-residue chain is MVIASGAIDRRHLSPFTPTSDDSSSSFFSQDLVPTERQVGFWNSESMVDHKGSKSVFASPLEKIQPNGANHAGDPETPGGQAFKGLDILSLSNLMRQENASGSPSLSWGEILTNPISRLGLSTRETAFVEPTTADQHVPGYGKGLSSSSLSEVFSGKSREIVSGVLCQSTGTHTSIYDSDEPLESMEAIEAQTIGDLLPDDDDDLISGIADGFEFTGMSTNQDDADEDIFCTGGGMELENNDSVKGDKVQDGSFKSQISSGHSINKQPSRTLVVRNITANIEDSDLTVLFQQYGDIRMLYTSFKHHGFVTVSYYDIRAAQNAMRALHSKPLGLMKLDVQFSFPKENVPGKDIDKGMLVVSNIDSSISNDDLLQMLSVYGDVKEISSSPISCTKKFVEFYDVRAAEEALHDLNKGGISGPKFKVELSQHGEAGSCLRQQHSREWKQDSLPHQPKNSSPGTIGKLGTKCQDNSTVHNLFSPVNQQLESPTQCISTTGPQILSSPIRIKSTLQHNNQASVGDLSGPLGQGNFGRGIQTLHPRSLPEHHNRICNNSKSMTVSGRNASSRQDGVDHNIQKVGPAGFCGHSFDQNNEAFGFTEIGSCPLHGYHYTWNHTNVFPQSPSAPILWSNLQHPMHVHSYPGVPPHMLNTGSYPMDQHHLGSAPDNGGSFGNVHSFHPGSLGSIGLHGSPQLYPSELSAFASSRGNFREALFSPVGGGFQSLQQMCNAINGRNPMIHVSTSYDATNDRMRSRRHDGNPAQSENKRQFELDIDRIAKGEDSRTTLMIKNIPNKYNCKLLLAVIDENHRGTYDFIYLPIDFKNKCNVGYAFINMTDPQHIIPFYKTFNGKKWEKFNSEKVASLAYARIQGRSALIAHFQNSSLMNEDKWCRPMLFHKDGPNAGDQEPFPVGNNVRSRAGRNRSLISLDTKDASPSSSPDQESNSVGTANSTCRTTLEQT.

Positions 64–83 (IQPNGANHAGDPETPGGQAF) are disordered. RRM domains lie at 270–343 (RTLV…FSFP) and 355–428 (GMLV…LSQH). 2 disordered regions span residues 436 to 465 (RQQHSREWKQDSLPHQPKNSSPGTIGKLGT) and 897 to 955 (NAGD…LEQT). Over residues 935-955 (DQESNSVGTANSTCRTTLEQT) the composition is skewed to polar residues.

Probable RNA-binding protein that may play a role in growth regulation. This is Protein MEI2-like 3 (ML3) from Oryza sativa subsp. japonica (Rice).